We begin with the raw amino-acid sequence, 455 residues long: Outer capsid protein sigma-1 (455 aa).

Residues Met1–Ile307 form a tail region. Positions Leu116–Thr148 form a coiled coil. Asn231, Asn264, and Asn282 each carry an N-linked (GlcNAc...) asparagine; by host glycan. The head stretch occupies residues Gly308–Thr455.

Belongs to the orthoreovirus sigma-1 protein family. As to quaternary structure, homotrimer. Interacts (via the head region) with human F11R. In terms of processing, undergoes dramatic conformational rearrangements during viral disassembly in the endocytic pathway.

It localises to the virion. Fiber-like molecule that attaches the virion to the host cell membrane by binding to the primary receptor F11R/JAM-A and to sialic acid containing proteins (coreceptor). The interaction of sigma-1 with F11R is required for NF-kB activation and apoptosis. Binding to both sialic acid and F11R is required to induce maximal levels of apoptosis. This chain is Outer capsid protein sigma-1 (S1), found in Reovirus type 3 (strain Dearing) (T3D).